The primary structure comprises 821 residues: Condensin-2 complex subunit kle-2 (821 aa).

Positions 389–426 (VMQNDEPNTSRRPDENYAPMDFDDDFGGGGDDDDDDYI) are disordered. The segment covering 409–424 (DFDDDFGGGGDDDDDD) has biased composition (acidic residues). Residues 529–561 (TAILAEKKRRIKEKTAKIREARIQNMQRKRTAR) adopt a coiled-coil conformation.

This sequence belongs to the CND2 H2 (condensin-2 subunit 2) family. In terms of assembly, component of the condensin II complex, which contains the mix-1/SMC2 and smc-4/SMC4 heterodimer, and three non SMC subunits, capg-2, kle-2 and hcp-6 that probably regulate the complex. Within the complex, interacts with mix-1, smc-4, capg-2 and hcp-6.

It localises to the nucleus. The protein resides in the chromosome. It is found in the centromere. Its function is as follows. Regulatory subunit of the condensin II complex, a complex that seems to play a role in prophase chromosome condensation and in chromosome segregation in mitosis and in meiosis. In Caenorhabditis elegans, this protein is Condensin-2 complex subunit kle-2 (kle-2).